A 120-amino-acid chain; its full sequence is uncharacterized protein (120 aa).

Its subcellular location is the virion. This is an uncharacterized protein from Acanthamoeba polyphaga mimivirus (APMV).